We begin with the raw amino-acid sequence, 377 residues long: Histone deacetylase 8 (377 aa).

The tract at residues 14–324 is histone deacetylase; the sequence is LVPVYIYSPE…WTYLTGVILG (311 aa). At serine 39 the chain carries Phosphoserine. Aspartate 101 provides a ligand contact to substrate. The Proton acceptor role is filled by histidine 143. A substrate-binding site is contributed by glycine 151. Residues aspartate 178, histidine 180, and aspartate 267 each coordinate a divalent metal cation. Tyrosine 306 provides a ligand contact to substrate.

Belongs to the histone deacetylase family. HD type 1 subfamily. In terms of assembly, interacts with PEPB2-MYH11, a fusion protein consisting of the 165 N-terminal residues of CBF-beta (PEPB2) with the tail region of MYH11 produced by the inversion Inv(16)(p13q22), a translocation associated with acute myeloid leukemia of M4EO subtype. The PEPB2-MYH1 fusion protein also interacts with RUNX1, a well known transcriptional regulator, suggesting that the interaction with HDAC8 may participate in the conversion of RUNX1 into a constitutive transcriptional repressor. Interacts with CBFA2T3. Interacts with phosphorylated SMG5/EST1B; this interaction protects SMG5 from ubiquitin-mediated degradation. Associates with alpha-SMA (smooth muscle alpha-actin). A divalent metal cation serves as cofactor. In terms of processing, phosphorylated by PKA on serine 39. Phosphorylation reduces deacetylase activity observed preferentially on histones H3 and H4. As to expression, weakly expressed in most tissues. Expressed at higher level in heart, brain, kidney and pancreas and also in liver, lung, placenta, prostate and kidney.

It is found in the nucleus. The protein localises to the chromosome. It localises to the cytoplasm. It carries out the reaction N(6)-acetyl-L-lysyl-[histone] + H2O = L-lysyl-[histone] + acetate. The catalysed reaction is N(6)-acetyl-L-lysyl-[protein] + H2O = L-lysyl-[protein] + acetate. The enzyme catalyses N(6)-(2E)-butenoyl-L-lysyl-[protein] + H2O = (2E)-2-butenoate + L-lysyl-[protein]. Its activity is inhibited by trichostatin A (TSA), suberoylanilide hydroxamic acid (SAHA), 3-(1-methyl-4-phenylacetyl-1H-2-pyrrolyl)-N-hydroxy-2-propenamide (APHA), 4-dimethylamino-N-(6-hydroxycarbamoyethyl)benzamide-N-hydroxy-7-(4-dimethylaminobenzoyl)aminoheptanamide (MS-344), 5-(4-methyl-benzoylamino)-biphenyl-3,4'-dicarboxylic acid 3-dimethylamide 4'-hydroxyamide (CRA-A) and butyrate. Its function is as follows. Histone deacetylase that catalyzes the deacetylation of lysine residues on the N-terminal part of the core histones (H2A, H2B, H3 and H4). Histone deacetylation gives a tag for epigenetic repression and plays an important role in transcriptional regulation, cell cycle progression and developmental events. Histone deacetylases act via the formation of large multiprotein complexes. Also involved in the deacetylation of cohesin complex protein SMC3 regulating release of cohesin complexes from chromatin. May play a role in smooth muscle cell contractility. In addition to protein deacetylase activity, also has protein-lysine deacylase activity: acts as a protein decrotonylase by mediating decrotonylation ((2E)-butenoyl) of histones. This is Histone deacetylase 8 from Homo sapiens (Human).